The primary structure comprises 833 residues: Piwi-like protein 2 (833 aa).

The 127-residue stretch at 227–353 (RINRVLNDNS…IPGELCFLCG (127 aa)) folds into the PAZ domain. The segment at 313 to 338 (PMRRERKKKDEEGVEKEKEKEAPEEK) is disordered. Residues 320 to 338 (KKDEEGVEKEKEKEAPEEK) show a composition bias toward basic and acidic residues. One can recognise a Piwi domain in the interval 515–815 (KMALVFVPDD…LAELVGKVHK (301 aa)).

It belongs to the argonaute family. Piwi subfamily. Expressed in dividing adult stem cells.

Its function is as follows. Required for the production of functional progeny from adult somatic stem cells (neoblasts). This Schmidtea mediterranea (Freshwater planarian flatworm) protein is Piwi-like protein 2 (wi-2).